We begin with the raw amino-acid sequence, 588 residues long: Sulfite reductase [NADPH] hemoprotein beta-component (588 aa).

Residues Cys-442, Cys-448, Cys-487, and Cys-491 each contribute to the [4Fe-4S] cluster site. Cys-491 is a binding site for siroheme.

This sequence belongs to the nitrite and sulfite reductase 4Fe-4S domain family. As to quaternary structure, alpha(8)-beta(8). The alpha component is a flavoprotein, the beta component is a hemoprotein. Siroheme serves as cofactor. Requires [4Fe-4S] cluster as cofactor.

The catalysed reaction is hydrogen sulfide + 3 NADP(+) + 3 H2O = sulfite + 3 NADPH + 4 H(+). It functions in the pathway sulfur metabolism; hydrogen sulfide biosynthesis; hydrogen sulfide from sulfite (NADPH route): step 1/1. Its function is as follows. Component of the sulfite reductase complex that catalyzes the 6-electron reduction of sulfite to sulfide. This is one of several activities required for the biosynthesis of L-cysteine from sulfate. The chain is Sulfite reductase [NADPH] hemoprotein beta-component from Actinobacillus pleuropneumoniae serotype 5b (strain L20).